A 287-amino-acid chain; its full sequence is Putative syntaxin-4 (287 aa).

At 1–262 (MHQISGINAA…NRKWKIVTCI (262 aa)) the chain is on the cytoplasmic side. The stretch at 65-97 (KCRKLNDHVDKFIAQARGIRRRLADASEELVQY) forms a coiled coil. Residues 184 to 246 (FDDMKNRATD…EQAQQNVRQA (63 aa)) enclose the t-SNARE coiled-coil homology domain. Residues 263–283 (ALIVLLLVVVYLLSHFLGAII) traverse the membrane as a helical; Anchor for type IV membrane protein segment. Over 284–287 (PGWK) the chain is Extracellular.

The protein belongs to the syntaxin family.

Its subcellular location is the membrane. Functionally, potentially involved in docking of synaptic vesicles at presynaptic active zones. This chain is Putative syntaxin-4 (syx-4), found in Caenorhabditis elegans.